The sequence spans 354 residues: Uroporphyrinogen decarboxylase (354 aa).

Substrate contacts are provided by residues 27–31 (RQAGR), Asp-77, Tyr-153, Thr-208, and His-326.

Belongs to the uroporphyrinogen decarboxylase family. As to quaternary structure, homodimer.

Its subcellular location is the cytoplasm. The catalysed reaction is uroporphyrinogen III + 4 H(+) = coproporphyrinogen III + 4 CO2. Its pathway is porphyrin-containing compound metabolism; protoporphyrin-IX biosynthesis; coproporphyrinogen-III from 5-aminolevulinate: step 4/4. Its function is as follows. Catalyzes the decarboxylation of four acetate groups of uroporphyrinogen-III to yield coproporphyrinogen-III. The chain is Uroporphyrinogen decarboxylase from Neisseria gonorrhoeae (strain ATCC 700825 / FA 1090).